We begin with the raw amino-acid sequence, 165 residues long: Ubiquitin-like protein ISG15 (165 aa).

Ubiquitin-like domains follow at residues 2–78 and 79–157; these read GWDL…VDKC and DEPL…LRGG. An S-nitrosocysteine; alternate modification is found at Cys-78. The short motif at 152-157 is the LRLRGG element; the sequence is LRLRGG. The involved in the ligation of specific target proteins stretch occupies residues 153 to 157; that stretch reads RLRGG. A Glycyl lysine isopeptide (Gly-Lys) (interchain with K-? in acceptor proteins) cross-link involves residue Gly-157. A propeptide spans 158–165 (removed in mature form); that stretch reads GTEPGGRS.

As to quaternary structure, homodimer; disulfide-linked. Interacts with, and is conjugated to its targets by UBE1L (E1 enzyme) and UBE2E2 (E2 enzyme). Interacts with NEDD4. Interacts with PARP12; this interaction inhibits PINK1/Parkin-dependent mitophagy. (Microbial infection) Interacts with vaccinia virus protein E3. In terms of assembly, (Microbial infection) Interaction with influenza B NS1 protein inhibits its conjugation. As to quaternary structure, (Microbial infection) Interacts (via C-terminus) with Crimean-Congo hemorrhagic fever virus (CCHFV) RNA-directed RNA polymerase L (via N-terminus); the deISGylase activity of the viral protein interferes with antiviral signaling pathways mediated by NF-kappaB and IRF signalings. (Microbial infection) Interacts with human cytomegalovirus protein UL26; this interaction inhibits global protein ISGylation. In terms of processing, S-nitrosylation decreases its dimerization, thereby increasing the availability as well as the solubility of monomeric ISG15 for its conjugation to cellular proteins. Post-translationally, induced as an inactive, precursor protein that is cleaved by specific proteases to expose the C-terminal diglycine (LRLRGG) motif. This motif is essential not only for its conjugation to substrates but also for its recognition by the relevant processing proteases. In terms of tissue distribution, detected in lymphoid cells, striated and smooth muscle, several epithelia and neurons. Expressed in neutrophils, monocytes and lymphocytes. Enhanced expression seen in pancreatic adenocarcinoma, endometrial cancer, and bladder cancer, as compared to non-cancerous tissue. In bladder cancer, the increase in expression exhibits a striking positive correlation with more advanced stages of the disease.

The protein resides in the cytoplasm. The protein localises to the secreted. Ubiquitin-like protein which plays a key role in the innate immune response to viral infection either via its conjugation to a target protein (ISGylation) or via its action as a free or unconjugated protein. ISGylation involves a cascade of enzymatic reactions involving E1, E2, and E3 enzymes which catalyze the conjugation of ISG15 to a lysine residue in the target protein. Its target proteins include IFIT1, MX1/MxA, PPM1B, UBE2L6, UBA7, CHMP5, CHMP2A, CHMP4B and CHMP6. Isgylation of the viral sensor IFIH1/MDA5 promotes IFIH1/MDA5 oligomerization and triggers activation of innate immunity against a range of viruses, including coronaviruses, flaviviruses and picornaviruses. Can also isgylate: EIF2AK2/PKR which results in its activation, RIGI which inhibits its function in antiviral signaling response, EIF4E2 which enhances its cap structure-binding activity and translation-inhibition activity, UBE2N and UBE2E1 which negatively regulates their activity, IRF3 which inhibits its ubiquitination and degradation and FLNB which prevents its ability to interact with the upstream activators of the JNK cascade thereby inhibiting IFNA-induced JNK signaling. Exhibits antiviral activity towards both DNA and RNA viruses, including influenza A, HIV-1 and Ebola virus. Restricts HIV-1 and ebola virus via disruption of viral budding. Inhibits the ubiquitination of HIV-1 Gag and host TSG101 and disrupts their interaction, thereby preventing assembly and release of virions from infected cells. Inhibits Ebola virus budding mediated by the VP40 protein by disrupting ubiquitin ligase activity of NEDD4 and its ability to ubiquitinate VP40. ISGylates influenza A virus NS1 protein which causes a loss of function of the protein and the inhibition of virus replication. The secreted form of ISG15 can: induce natural killer cell proliferation, act as a chemotactic factor for neutrophils and act as a IFN-gamma-inducing cytokine playing an essential role in antimycobacterial immunity. The secreted form acts through the integrin ITGAL/ITGB2 receptor to initiate activation of SRC family tyrosine kinases including LYN, HCK and FGR which leads to secretion of IFNG and IL10; the interaction is mediated by ITGAL. This Homo sapiens (Human) protein is Ubiquitin-like protein ISG15.